The sequence spans 161 residues: Disulfide bond formation protein B (161 aa).

The Cytoplasmic segment spans residues Met-1–Tyr-8. A helical transmembrane segment spans residues Phe-9–Tyr-25. Over Leu-26 to Phe-43 the chain is Periplasmic. The cysteines at positions 35 and 38 are disulfide-linked. Residues Ala-44–Ala-58 traverse the membrane as a helical segment. The Cytoplasmic portion of the chain corresponds to Gln-59–Ser-63. The helical transmembrane segment at Leu-64–Val-81 threads the bilayer. Residues Tyr-82–Ala-136 are Periplasmic-facing. Cys-94 and Cys-122 are disulfide-bonded. The helical transmembrane segment at Trp-137–Arg-155 threads the bilayer. The Cytoplasmic portion of the chain corresponds to Arg-156–Arg-161.

This sequence belongs to the DsbB family.

It is found in the cell inner membrane. In terms of biological role, required for disulfide bond formation in some periplasmic proteins. Acts by oxidizing the DsbA protein. The protein is Disulfide bond formation protein B of Cupriavidus pinatubonensis (strain JMP 134 / LMG 1197) (Cupriavidus necator (strain JMP 134)).